The sequence spans 261 residues: Cobalt-precorrin-6A reductase (261 aa).

It belongs to the precorrin-6x reductase family.

The enzyme catalyses Co-precorrin-6B + NAD(+) = Co-precorrin-6A + NADH + H(+). Its pathway is cofactor biosynthesis; adenosylcobalamin biosynthesis; cob(II)yrinate a,c-diamide from sirohydrochlorin (anaerobic route): step 7/10. Catalyzes the reduction of the macrocycle of cobalt-precorrin-6A to cobalt-precorrin-6B. The sequence is that of Cobalt-precorrin-6A reductase (cbiJ) from Synechocystis sp. (strain ATCC 27184 / PCC 6803 / Kazusa).